The chain runs to 128 residues: 3-aminoacrylate deaminase RutC (128 aa).

The protein belongs to the RutC family. As to quaternary structure, homotrimer.

It carries out the reaction (Z)-3-aminoacrylate + H2O + H(+) = 3-oxopropanoate + NH4(+). Involved in pyrimidine catabolism. Catalyzes the deamination of 3-aminoacrylate to malonic semialdehyde, a reaction that can also occur spontaneously. RutC may facilitate the reaction and modulate the metabolic fitness, rather than catalyzing essential functions. The sequence is that of 3-aminoacrylate deaminase RutC from Escherichia coli O157:H7.